Consider the following 177-residue polypeptide: Large ribosomal subunit protein uL6 (177 aa).

This sequence belongs to the universal ribosomal protein uL6 family. As to quaternary structure, part of the 50S ribosomal subunit.

Its function is as follows. This protein binds to the 23S rRNA, and is important in its secondary structure. It is located near the subunit interface in the base of the L7/L12 stalk, and near the tRNA binding site of the peptidyltransferase center. The protein is Large ribosomal subunit protein uL6 of Bradyrhizobium sp. (strain BTAi1 / ATCC BAA-1182).